Reading from the N-terminus, the 174-residue chain is Frataxin homolog, mitochondrial (174 aa).

The N-terminal 21 residues, 1–21, are a transit peptide targeting the mitochondrion; it reads MIKRSLASLVRVSSVMGRRYM.

The protein belongs to the frataxin family. Monomer. Forms a 24-mer complex made up of 8 copies of a trimeric subcomplex. Increments in mitochondrial iron uptake induce stepwise assembly of species ranging from trimers to 24-mers. Interacts with ISU1 with a 1 to 1 stoichiometry; the interaction is direct. Interacts with YHB1, SDH1, SDH2, AIM45 and CIR1. Post-translationally, processed in two steps by mitochondrial processing peptidase (MPP). MPP first cleaves the precursor to intermediate form and subsequently converts the intermediate to mature size protein.

The protein resides in the mitochondrion matrix. It carries out the reaction 4 Fe(2+) + O2 + 4 H(+) = 4 Fe(3+) + 2 H2O. Promotes the biosynthesis of heme as well as the assembly and repair of iron-sulfur clusters by delivering Fe(2+) to proteins involved in these pathways. Plays a role in the protection against iron-catalyzed oxidative stress through its ability to catalyze the oxidation of Fe(2+) to Fe(3+). Can store large amounts of the metal in the form of a ferrihydrite mineral by oligomerization. May be involved in regulation of the mitochondrial electron transport chain. The sequence is that of Frataxin homolog, mitochondrial from Saccharomyces cerevisiae (strain ATCC 204508 / S288c) (Baker's yeast).